Reading from the N-terminus, the 527-residue chain is Peptide chain release factor 3 (527 aa).

Residues 9–277 form the tr-type G domain; sequence AKRRTFAIIS…CIVDWAPQPL (269 aa). GTP-binding positions include 18 to 25, 86 to 90, and 140 to 143; these read SHPDAGKT, DTPGH, and NKLD.

This sequence belongs to the TRAFAC class translation factor GTPase superfamily. Classic translation factor GTPase family. PrfC subfamily.

It localises to the cytoplasm. In terms of biological role, increases the formation of ribosomal termination complexes and stimulates activities of RF-1 and RF-2. It binds guanine nucleotides and has strong preference for UGA stop codons. It may interact directly with the ribosome. The stimulation of RF-1 and RF-2 is significantly reduced by GTP and GDP, but not by GMP. This Pseudomonas paraeruginosa (strain DSM 24068 / PA7) (Pseudomonas aeruginosa (strain PA7)) protein is Peptide chain release factor 3.